Here is a 98-residue protein sequence, read N- to C-terminus: Small proline-rich protein 2B (98 aa).

Tandem repeats lie at residues 21-29 (PKCPEPCPP), 30-38 (PKCPEPCPP), 39-47 (PVCCEPCPP), 48-56 (PKCPEPCPP), and 57-65 (PVCCEPCPP). The 5 X 9 AA approximate tandem repeats stretch occupies residues 21–65 (PKCPEPCPPPKCPEPCPPPVCCEPCPPPKCPEPCPPPVCCEPCPP).

Belongs to the cornifin (SPRR) family. In terms of tissue distribution, expressed in uterus.

The protein resides in the cytoplasm. In terms of biological role, cross-linked envelope protein of keratinocytes. It is a keratinocyte protein that first appears in the cell cytosol, but ultimately becomes cross-linked to membrane proteins by transglutaminase. All that results in the formation of an insoluble envelope beneath the plasma membrane. This is Small proline-rich protein 2B (Sprr2b) from Mus musculus (Mouse).